The following is a 259-amino-acid chain: Thiazole synthase (259 aa).

Lys99 acts as the Schiff-base intermediate with DXP in catalysis. 1-deoxy-D-xylulose 5-phosphate contacts are provided by residues Gly161, 187–188 (AG), and 209–219 (NSAIACAQNPI).

The protein belongs to the ThiG family. As to quaternary structure, homotetramer. Forms heterodimers with either ThiH or ThiS.

Its subcellular location is the cytoplasm. The enzyme catalyses [ThiS sulfur-carrier protein]-C-terminal-Gly-aminoethanethioate + 2-iminoacetate + 1-deoxy-D-xylulose 5-phosphate = [ThiS sulfur-carrier protein]-C-terminal Gly-Gly + 2-[(2R,5Z)-2-carboxy-4-methylthiazol-5(2H)-ylidene]ethyl phosphate + 2 H2O + H(+). Its pathway is cofactor biosynthesis; thiamine diphosphate biosynthesis. Catalyzes the rearrangement of 1-deoxy-D-xylulose 5-phosphate (DXP) to produce the thiazole phosphate moiety of thiamine. Sulfur is provided by the thiocarboxylate moiety of the carrier protein ThiS. In vitro, sulfur can be provided by H(2)S. This chain is Thiazole synthase, found in Aliarcobacter butzleri (strain RM4018) (Arcobacter butzleri).